The sequence spans 136 residues: Glutaredoxin-C7 (136 aa).

Positions 29–135 (LLRIESLASE…PLLKDAGALW (107 aa)) constitute a Glutaredoxin domain. Cysteine 49 and cysteine 52 are joined by a disulfide. A Responsive for interaction with TGA factors motif is present at residues 133–136 (ALWL).

This sequence belongs to the glutaredoxin family. CC-type subfamily. Interacts with TGA2, TGA3, TGA7 and PAN. Interacts with TGA9 and TGA10 in the nucleus. As to expression, highly expressed in inflorescences, roots, and siliques. Expressed at lower levels in mature flowers.

The protein resides in the cytoplasm. Its subcellular location is the nucleus. Functionally, has a glutathione-disulfide oxidoreductase activity in the presence of NADPH and glutathione reductase. Reduces low molecular weight disulfides and proteins. Involved in flower development as a regulator of petal primorida initiation and further petal morphogenesis. May mediate post-translational modifications of target proteins required for normal petal organ initiation and morphogenesis. ROXY1/TGA protein interactions can occur in vivo and support their biological relevance in petal development. May be involved in the regulation of the floral regulator class C gene AG (AGAMOUS). This is Glutaredoxin-C7 (GRXC7) from Arabidopsis thaliana (Mouse-ear cress).